We begin with the raw amino-acid sequence, 1587 residues long: MTDKPGSAEDTIEMDDTCSPQFVQEVNRIKSQIKSLVEENHTRKFFRPLTSNIGDETAILRIQFNNMMSKMEEKEKQSLVKELIKMVHHVAEKNSPDRVFVGTNYERVVDQLLRYAHQKGAISTNLCAEGLIMTSDFRLCSRICQEKWKFINDCIPKIDYKGIRNILRYILESQLRRLPYSLSPEQVNEIRIVENVILHIVDRDSNLMPPLITLSEIMRGMPKQALMLPRLTEKLASLSVHFRPIADLSHVCGRGFVYPIPLHPSFYPLTSCWEEHGLNASNTIVQPHHTLPYRPEHTSTYLYTLYMILRQPLGKDSLHPPSKTKTKTNWEMLISVMICESMAEAESLPETEPIPRYQWDNIVNIVIYGITQHLLVPKTFFNVLKNLIKRCKYTRARDEVMWIVFQVVGSLSNLTRLDDAVTEIVELYNELFDGDVVWMGASDHPALFARFLAAAGTWMILEKDFADKMPPANETIKSHIKFIQDGVDNFDSSNTAMLAVLSNIYRTDTKMGKLIVPTLQQMLESIDDTKSLFELSYKRMAVNCFSAFPVEFMEALTFRSKKTLLIQCFQPLRSFSTVRLPSPAVFETVAKICESEDYEMAVKDMEHLAQRSLHVATAADRSSGEHQNVQAKDQCYFLFDFLVYRLPHLHAYSKYSSTVNALSYFTQHIPNNPQNHQIYRLMEQFLMRRWCWAGFHGCITAHTQMFGTSYKDNTMMRHMAYPKTFSVPDQYPFAINPEIFKMAIYSFLRAVKITAQDIAIEKTMFPTIINGFGWPEKSTSYFPKWALDAIKASDTSNAVNTEEILSDVRNTARMHTSLTPNQFVIRYGEDRDPATSHCMLAVLFHFAYNSVDSTYNITSEFYEVMEKKTPKEIVVMGNYLVDYIIADAKTQDCNEKTFKNIAKAAALLVFQFQVLRADRLLLSLIMHPATDEDALICIQIANEFILTPEFQERIRWYHQNVPKKDHFPTEYIKAIVKYHDAFPEFEACELVRSYDSSSNVHMPTYYGCLIERLLPIMDQYLHVALEQQGYKLNPQILQSVSMLYKFHAMPIHFMYSVLFTSHGLMSGPDAKSFVLAFATQIEECHLTEAFEKFNHQKSSREQLIMELIDRMSASLDFILTPPPFVAKDWKIAELSPGAQTLYLACIELMASPHSPETLVAAMINVMQMKPHARPFNIVNLTALLLTALPAAYSNALHDEFVAVFVNGETANLKFEEIVFDNYEESLLLNLPNRARTINVISQQYWLHCSLSLLNFFSHEYVPRILEHVKTEKDLWYTLRLVMPYLRRYYENWDTAKQMRSQRENFGPLHIVKLVFQKLGSMAEEGVEIVYEQHLCDLFYNCKYFFAGDFLRNTAITEFAKLPEKMRDRLKFYVSQSEPTAEQETPPEKEKSPEKEKEQEQEQHVKAHQPLESTPSVSSLPQMQHHLQQAPLLPSHQMMPPPQQHSSSLQHHLQHHTSTHQMMDTSQHQTIQQQSNHPTQQQLQHQIPNMSMHQQMGPQYPGAVFHHPSGPVGHVPMQYGMGHHMQQHPHLPHHQQMPAPMHTMNPMMQNMTPQQQYLYMQQLQQHQQHQQYMQQQQQHHHQHQQQPH.

Disordered stretches follow at residues 1374–1484 (SQSE…QLQH) and 1567–1587 (QHQQ…QQPH). Residues 1385–1404 (PPEKEKSPEKEKEQEQEQHV) show a composition bias toward basic and acidic residues. Residues 1387–1404 (EKEKSPEKEKEQEQEQHV) form an acidic region. Positions 1410 to 1426 (LESTPSVSSLPQMQHHL) are enriched in polar residues. Residues 1430–1450 (PLLPSHQMMPPPQQHSSSLQH) show a composition bias toward low complexity. Residues 1463–1484 (DTSQHQTIQQQSNHPTQQQLQH) show a composition bias toward polar residues. The span at 1567–1576 (QHQQYMQQQQ) shows a compositional bias: low complexity. A compositionally biased stretch (basic residues) spans 1577–1587 (QHHHQHQQQPH).

Belongs to the Mediator complex subunit 23 family. Component of the Mediator complex. Interacts with let-19/mdt-13.

Its subcellular location is the nucleus. Functionally, component of the Mediator complex, a coactivator involved in regulated gene transcription of nearly all RNA polymerase II-dependent genes. Mediator functions as a bridge to convey information from gene-specific regulatory proteins to the basal RNA polymerase II transcription machinery. Mediator is recruited to promoters by direct interactions with regulatory proteins and serves as a scaffold for the assembly of a functional pre-initiation complex with RNA polymerase II and the general transcription factors. Functions downstream of receptor let-23 and let-60/Ras during vulval induction likely by down-regulating the expression of phosphatase dep-1 and lin-12/Notch in vulva precursor cell descendants with a primary cell fate. Acts to repress beta-catenin target genes. Required for asymmetric division of T-cells. Plays a role in responses to M.nematophilum-mediated bacterial infection by promoting tail swelling and preventing constipation. The protein is Mediator of RNA polymerase II transcription subunit 23 (sur-2) of Caenorhabditis elegans.